The sequence spans 179 residues: Replication restart protein DnaT (179 aa).

Residues 151-179 (SRASNGGQPKRDVNSVSEPDSHIPRGFRG) are disordered. A compositionally biased stretch (basic and acidic residues) spans 159–173 (PKRDVNSVSEPDSHI).

Belongs to the DnaT family. As to quaternary structure, homooligomerizes. Interacts with PriB. Component of the replication restart primosome. Primosome assembly occurs via a 'hand-off' mechanism. PriA binds to replication forks, subsequently PriB then DnaT bind; DnaT then displaces ssDNA to generate the helicase loading substrate.

In terms of biological role, involved in the restart of stalled replication forks, which reloads the replicative helicase on sites other than the origin of replication. Can function in multiple replication restart pathways. Displaces ssDNA from a PriB-ssDNA complex. Probably forms a spiral filament on ssDNA. The sequence is that of Replication restart protein DnaT from Klebsiella pneumoniae (strain 342).